The sequence spans 433 residues: DNA polymerase processivity factor (433 aa).

A disordered region spans residues 274–433 (RGDPFDKNYV…VPNTKKQKCG (160 aa)). Positions 298-307 (SLSSLANAGG) are enriched in low complexity. 2 stretches are compositionally biased toward gly residues: residues 325-336 (GLGGLGGGGGGG) and 344-359 (GGGG…GGGG). Residues 360–376 (GDHDHGLSSKEKYEQHK) are compositionally biased toward basic and acidic residues. The segment covering 385–398 (GGSGGGGGGGGGGL) has biased composition (gly residues).

This sequence belongs to the herpesviridae polymerase accessory protein family. In terms of assembly, forms homodimers. Interacts with host SMARCB1. Interacts with host NCL/nucleolin; this interaction is important for the organization of proteins within viral replication compartments. Interacts with UL112/UL113; this interaction is necessary for efficient viral DNA replication. Interacts with UL84. Interacts with the uracil DNA glycosylase UL114. Interacts with the DNA polymerase catalytic subunit UL54. Interacts with host IRF3. Interacts with host RELA. In terms of processing, phosphorylated by UL97 on serine residues, phosphorylation seems important for UL44 nuclear entry but does not directly affect its role in replication. Post-translationally, sumoylated. Sumoylation on Lys-410 increases viral DNA replication.

Its subcellular location is the virion. It is found in the host nucleus. In terms of biological role, accessory subunit of the DNA polymerase that plays an essential role in viral DNA replication and acts by increasing the processivity of polymerization. Forms dimers that binds to double-stranded DNA and UL54 specifically to stimulates long chain DNA synthesis efficiently. Plays an important role in maintaining the structure of viral replication compartments by interacting with host nucleolin/NUC. In addition, suppresses innate immune responses through effects on host IRF3 and NF-kappa-B. Mechanistically, interfere with the binding of IRF3 and the p65 NF-kappa-B subunit to the promoters of antiviral genes, thereby inhibiting the expression of these genes. The sequence is that of DNA polymerase processivity factor (UL44) from Human cytomegalovirus (strain Merlin) (HHV-5).